The chain runs to 101 residues: Small ribosomal subunit protein uS14 (101 aa).

Belongs to the universal ribosomal protein uS14 family. In terms of assembly, part of the 30S ribosomal subunit. Contacts proteins S3 and S10.

Binds 16S rRNA, required for the assembly of 30S particles and may also be responsible for determining the conformation of the 16S rRNA at the A site. The sequence is that of Small ribosomal subunit protein uS14 from Chlamydia muridarum (strain MoPn / Nigg).